Consider the following 146-residue polypeptide: Hemoglobin subunit beta (146 aa).

Valine 1 bears the N-acetylvaline mark. Positions 2 to 146 (HLTADEKAAV…VATALAHKYH (145 aa)) constitute a Globin domain. A Phosphoserine modification is found at serine 44. N6-acetyllysine is present on lysine 59. A heme b-binding site is contributed by histidine 63. Lysine 82 bears the N6-acetyllysine mark. Heme b is bound at residue histidine 92. Residue cysteine 93 is modified to S-nitrosocysteine. The residue at position 144 (lysine 144) is an N6-acetyllysine.

It belongs to the globin family. As to quaternary structure, heterotetramer of two alpha chains and two beta chains. Red blood cells.

Involved in oxygen transport from the lung to the various peripheral tissues. This Myotis velifer (Mouse-eared bat) protein is Hemoglobin subunit beta (HBB).